Consider the following 345-residue polypeptide: RNA polymerase II holoenzyme cyclin-like subunit (345 aa).

In terms of domain architecture, Cyclin N-terminal spans 23–147 (ESRRKLLLLE…KLAEFEFYLI (125 aa)).

Belongs to the cyclin family. Cyclin C subfamily. Component of the SRB8-11 complex, a regulatory module of the Mediator complex.

It localises to the nucleus. Component of the SRB8-11 complex. The SRB8-11 complex is a regulatory module of the Mediator complex which is itself involved in regulation of basal and activated RNA polymerase II-dependent transcription. The SRB8-11 complex may be involved in the transcriptional repression of a subset of genes regulated by Mediator. It may inhibit the association of the Mediator complex with RNA polymerase II to form the holoenzyme complex. The SRB8-11 complex phosphorylates the C-terminal domain (CTD) of the largest subunit of RNA polymerase II. This Debaryomyces hansenii (strain ATCC 36239 / CBS 767 / BCRC 21394 / JCM 1990 / NBRC 0083 / IGC 2968) (Yeast) protein is RNA polymerase II holoenzyme cyclin-like subunit (SSN8).